The following is a 372-amino-acid chain: MSNQHALLMFNLLPVGSNISTWWNFGSMLLTCLMLQTITGFFLALHYTANINLAFSSVIHITRDVPYGWIMQNLHAISASLFFVCIYIHIARGLYYGLYLNKEVWLSGTALLITLMATAFFGYVLPWGQMSFWAATVITNLLTAIPYLGTTLTTWLWGGFSINDPTITRFFALHFILPFIIISLSSIHIILLHNEGSNNPLGTNSDIDKIPFHPYHSYKDMLMATTMITLLFLILSFAPNLLNDPENFSKANPLVTPQHIKPEWYFLFAYGILRSIPNKLGGTLALIMSVMILTTMPFTHTSHTRSMMFRPLSQILFWTLIATFITITWTASKPVEPPFITISQTTSIIYFFFFITTPLLGWAENKMMMMNN.

4 helical membrane passes run 25–45 (FGSMLLTCLMLQTITGFFLAL), 69–90 (WIMQNLHAISASLFFVCIYIHI), 105–125 (WLSGTALLITLMATAFFGYVL), and 170–190 (FFALHFILPFIIISLSSIHII). Heme b-binding residues include His75 and His89. Residues His174 and His188 each coordinate heme b. His193 contributes to the a ubiquinone binding site. 4 helical membrane passes run 218 to 238 (YKDMLMATTMITLLFLILSFA), 280 to 300 (LGGTLALIMSVMILTTMPFTH), 312 to 332 (LSQILFWTLIATFITITWTAS), and 339 to 358 (FITISQTTSIIYFFFFITTP).

It belongs to the cytochrome b family. In terms of assembly, the cytochrome bc1 complex contains 3 respiratory subunits (MT-CYB, CYC1 and UQCRFS1), 2 core proteins (UQCRC1 and UQCRC2) and probably 6 low-molecular weight proteins. Heme b is required as a cofactor.

The protein localises to the mitochondrion inner membrane. In terms of biological role, component of the ubiquinol-cytochrome c reductase complex (complex III or cytochrome b-c1 complex) that is part of the mitochondrial respiratory chain. The b-c1 complex mediates electron transfer from ubiquinol to cytochrome c. Contributes to the generation of a proton gradient across the mitochondrial membrane that is then used for ATP synthesis. This Naja nivea (Cape cobra) protein is Cytochrome b (MT-CYB).